The chain runs to 144 residues: UPF0102 protein BPSL3274 (144 aa).

The disordered stretch occupies residues 1–28 (MCHAREASPGTGEPEAAPRDNFPREAGS). Over residues 16–28 (AAPRDNFPREAGS) the composition is skewed to basic and acidic residues.

Belongs to the UPF0102 family.

The chain is UPF0102 protein BPSL3274 from Burkholderia pseudomallei (strain K96243).